Consider the following 148-residue polypeptide: Extracellular globin-2B (148 aa).

Residues 3-148 form the Globin domain; the sequence is CCSAADRHEV…IADVIKAELP (146 aa). Residues Cys4 and Cys135 are joined by a disulfide bond. His98 is a heme b binding site.

It belongs to the globin family. In terms of assembly, disulfide bonded trimer of chains IIA, IIB, and IIC.

The protein localises to the secreted. This Tylorrhynchus heterochetus (Japanese palolo worm) protein is Extracellular globin-2B.